We begin with the raw amino-acid sequence, 115 residues long: Nucleoid-associated protein alr5067 (115 aa).

It belongs to the YbaB/EbfC family. In terms of assembly, homodimer.

It is found in the cytoplasm. The protein localises to the nucleoid. Functionally, binds to DNA and alters its conformation. May be involved in regulation of gene expression, nucleoid organization and DNA protection. The sequence is that of Nucleoid-associated protein alr5067 from Nostoc sp. (strain PCC 7120 / SAG 25.82 / UTEX 2576).